A 229-amino-acid polypeptide reads, in one-letter code: Triosephosphate isomerase (229 aa).

Position 16-18 (16-18) interacts with substrate; that stretch reads NFK. The active-site Electrophile is His100. Glu148 acts as the Proton acceptor in catalysis. Substrate-binding positions include Ile153, Gly188, and 209 to 210; that span reads AS.

This sequence belongs to the triosephosphate isomerase family. Homotetramer; dimer of dimers.

Its subcellular location is the cytoplasm. It catalyses the reaction D-glyceraldehyde 3-phosphate = dihydroxyacetone phosphate. It functions in the pathway carbohydrate biosynthesis; gluconeogenesis. Its pathway is carbohydrate degradation; glycolysis; D-glyceraldehyde 3-phosphate from glycerone phosphate: step 1/1. Its function is as follows. Involved in the gluconeogenesis. Catalyzes stereospecifically the conversion of dihydroxyacetone phosphate (DHAP) to D-glyceraldehyde-3-phosphate (G3P). This chain is Triosephosphate isomerase, found in Methanothermobacter thermautotrophicus (strain ATCC 29096 / DSM 1053 / JCM 10044 / NBRC 100330 / Delta H) (Methanobacterium thermoautotrophicum).